We begin with the raw amino-acid sequence, 274 residues long: Protein LIKE COV 3 (274 aa).

The Cytoplasmic segment spans residues 1–60; that stretch reads METRERDLERLIPMHKSGASPRDVVLSVPPSPLASPIHVAGKEAIYKVIRSWASKKFMTG. A helical membrane pass occupies residues 61–81; sequence CVILLPIAVTFYFTWWFIHFV. Over 82–93 the chain is Extracellular; sequence DGFFSPIYTHLG. Residues 94–114 form a helical membrane-spanning segment; sequence INMFGLGFVTSITFIFMVGVF. Topologically, residues 115–274 are cytoplasmic; it reads MSSWLGASVL…VCLSLVLAWT (160 aa).

Belongs to the plant COV1 protein family.

It localises to the membrane. This Arabidopsis thaliana (Mouse-ear cress) protein is Protein LIKE COV 3.